We begin with the raw amino-acid sequence, 398 residues long: ATP-dependent RNA helicase eIF4A (398 aa).

A Q motif motif is present at residues 25–53 (DSFDSMELKPELLRGVYAYGFERPSAIQQ). One can recognise a Helicase ATP-binding domain in the interval 56–226 (ILPIVKGNDV…TKFMRDPVRI (171 aa)). 69-76 (AQSGTGKT) serves as a coordination point for ATP. The DEAD box signature appears at 174-177 (DEAD). One can recognise a Helicase C-terminal domain in the interval 237–398 (GIKQFYIAVE…EMPMNVADLI (162 aa)).

The protein belongs to the DEAD box helicase family. eIF4A subfamily. In terms of assembly, component of the eIF4F complex, which composition varies with external and internal environmental conditions. It is composed of at least eIF4A, eIF4E and eIF4G.

It localises to the cytoplasm. The enzyme catalyses ATP + H2O = ADP + phosphate + H(+). ATP-dependent RNA helicase which is a subunit of the eIF4F complex involved in cap recognition and is required for mRNA binding to ribosome. In the current model of translation initiation, eIF4A unwinds RNA secondary structures in the 5'-UTR of mRNAs which is necessary to allow efficient binding of the small ribosomal subunit, and subsequent scanning for the initiator codon. The protein is ATP-dependent RNA helicase eIF4A (tif1) of Emericella nidulans (strain FGSC A4 / ATCC 38163 / CBS 112.46 / NRRL 194 / M139) (Aspergillus nidulans).